The following is a 564-amino-acid chain: E3 ubiquitin-protein ligase TRIM16 (564 aa).

Positions 1–70 (MAELDLMAPG…DPAEQGDPAG (70 aa)) are disordered. Positions 24-39 (SPDSGSPSPDSGSASP) are enriched in low complexity. B box-type zinc fingers lie at residues 72–122 (GKEV…LTEP) and 126–165 (HNWRYCPAHHSPLSAFCCPDQQCICQDCCQEHSGHTIVSL). Phosphoserine is present on S116. Zn(2+) is bound by residues C131, H134, C153, and H157. 3 coiled-coil regions span residues 165 to 203 (LDAARRDKEAELQCTQLDLERKLKLNENAISRLQANQKS), 243 to 274 (AALSQANGIKAHLEYRSAEMEKSKQELERMAA), and 320 to 340 (HLIQLLENYKKKLQEFSKEEE). At S203 the chain carries Phosphoserine. Residues 355–553 (YWTSKPEPST…RIVDLGEEPE (199 aa)) form the B30.2/SPRY domain.

This sequence belongs to the TRIM/RBCC family. In terms of assembly, homodimerizes via its coiled-coil domain. Heterodimerizes with MID1, TRIM24 and PML. Interacts with Galectin-3/LGALS3 in a ULK1-dependent manner; this interaction mediates autophagy of damage endomembranes. Interacts with BECN1. Interacts with ATG16L1. Interacts with p62/SQSTM and LC3B/MAP1LC3B. Phosphorylated by ULK1. Post-translationally, auto-ubiquitinates via its B-Boxes.

Its subcellular location is the cytoplasm. It catalyses the reaction S-ubiquitinyl-[E2 ubiquitin-conjugating enzyme]-L-cysteine + [acceptor protein]-L-lysine = [E2 ubiquitin-conjugating enzyme]-L-cysteine + N(6)-ubiquitinyl-[acceptor protein]-L-lysine.. In terms of biological role, E3 ubiquitin ligase that plays an essential role in the organization of autophagic response and ubiquitination upon lysosomal and phagosomal damages. Plays a role in the stress-induced biogenesis and degradation of protein aggresomes by regulating the p62-KEAP1-NRF2 signaling and particularly by modulating the ubiquitination levels and thus stability of NRF2. Acts as a scaffold protein and facilitates autophagic degradation of protein aggregates by interacting with p62/SQSTM, ATG16L1 and LC3B/MAP1LC3B. In turn, protects the cell against oxidative stress-induced cell death as a consequence of endomembrane damage. The chain is E3 ubiquitin-protein ligase TRIM16 (TRIM16) from Pongo abelii (Sumatran orangutan).